A 238-amino-acid polypeptide reads, in one-letter code: Ribonuclease PH (238 aa).

Phosphate is bound by residues R86 and 124–126 (GTR).

The protein belongs to the RNase PH family. Homohexameric ring arranged as a trimer of dimers.

The catalysed reaction is tRNA(n+1) + phosphate = tRNA(n) + a ribonucleoside 5'-diphosphate. Its function is as follows. Phosphorolytic 3'-5' exoribonuclease that plays an important role in tRNA 3'-end maturation. Removes nucleotide residues following the 3'-CCA terminus of tRNAs; can also add nucleotides to the ends of RNA molecules by using nucleoside diphosphates as substrates, but this may not be physiologically important. Probably plays a role in initiation of 16S rRNA degradation (leading to ribosome degradation) during starvation. This Rhizorhabdus wittichii (strain DSM 6014 / CCUG 31198 / JCM 15750 / NBRC 105917 / EY 4224 / RW1) (Sphingomonas wittichii) protein is Ribonuclease PH.